The chain runs to 528 residues: Protein WHAT'S THIS FACTOR 1 homolog, chloroplastic (528 aa).

The N-terminal 73 residues, 1–73, are a transit peptide targeting the chloroplast; it reads MEPKLLLSAH…KTRVVVEPVR (73 aa). The region spanning 80–408 is the PORR domain; it reads KELTFDSVVQ…VKEKMRALVS (329 aa). The tract at residues 410-528 is disordered; the sequence is PRFPRRGGPR…FPDGTPREKW (119 aa). Over residues 418–428 the composition is skewed to basic and acidic residues; the sequence is PRKDEEGREVE. A compositionally biased stretch (acidic residues) spans 429–491; that stretch reads IDGSDADGEE…DDDDEDEEED (63 aa).

It is found in the plastid. The protein localises to the chloroplast. Its function is as follows. RNA-binding protein involved in group II intron splicing. Binds specific group II introns and promotes their splicing. Functions in the context of a heterodimer with the ribonuclease III domain-containing protein RNC1. This is Protein WHAT'S THIS FACTOR 1 homolog, chloroplastic from Arabidopsis thaliana (Mouse-ear cress).